Consider the following 37-residue polypeptide: Large ribosomal subunit protein bL36c (37 aa).

It belongs to the bacterial ribosomal protein bL36 family.

The protein localises to the plastid. It is found in the chloroplast. The protein is Large ribosomal subunit protein bL36c of Cyanidioschyzon merolae (strain NIES-3377 / 10D) (Unicellular red alga).